The primary structure comprises 419 residues: Multifunctional CCA protein (419 aa).

Residues Gly8 and Arg11 each contribute to the ATP site. The CTP site is built by Gly8 and Arg11. 2 residues coordinate Mg(2+): Asp21 and Asp23. ATP-binding residues include Arg91, Arg149, and Arg152. The CTP site is built by Arg91, Arg149, and Arg152. An HD domain is found at 238 to 339 (CGVHLMMVID…VRLLERCDAF (102 aa)).

This sequence belongs to the tRNA nucleotidyltransferase/poly(A) polymerase family. Bacterial CCA-adding enzyme type 1 subfamily. As to quaternary structure, monomer. Can also form homodimers and oligomers. Mg(2+) serves as cofactor. The cofactor is Ni(2+).

The enzyme catalyses a tRNA precursor + 2 CTP + ATP = a tRNA with a 3' CCA end + 3 diphosphate. The catalysed reaction is a tRNA with a 3' CCA end + 2 CTP + ATP = a tRNA with a 3' CCACCA end + 3 diphosphate. In terms of biological role, catalyzes the addition and repair of the essential 3'-terminal CCA sequence in tRNAs without using a nucleic acid template. Adds these three nucleotides in the order of C, C, and A to the tRNA nucleotide-73, using CTP and ATP as substrates and producing inorganic pyrophosphate. tRNA 3'-terminal CCA addition is required both for tRNA processing and repair. Also involved in tRNA surveillance by mediating tandem CCA addition to generate a CCACCA at the 3' terminus of unstable tRNAs. While stable tRNAs receive only 3'-terminal CCA, unstable tRNAs are marked with CCACCA and rapidly degraded. This chain is Multifunctional CCA protein, found in Variovorax paradoxus (strain S110).